Reading from the N-terminus, the 248-residue chain is Triosephosphate isomerase (248 aa).

Residues Asn-12 and Lys-14 each coordinate substrate. The interval 16–30 is igE-binding; it reads NGDRAGIDSIISFMK. The active-site Electrophile is the His-95. The active-site Proton acceptor is Glu-165. IgE-binding regions lie at residues 166–180 and 205–219; these read PVWA…TPEQ and RIIY…NCKE.

The protein belongs to the triosephosphate isomerase family. Homodimer. Expressed in skeletal muscle (at protein level).

It localises to the cytoplasm. It carries out the reaction D-glyceraldehyde 3-phosphate = dihydroxyacetone phosphate. The catalysed reaction is dihydroxyacetone phosphate = methylglyoxal + phosphate. Its pathway is carbohydrate biosynthesis; gluconeogenesis. It functions in the pathway carbohydrate degradation; glycolysis; D-glyceraldehyde 3-phosphate from glycerone phosphate: step 1/1. Triosephosphate isomerase is an extremely efficient metabolic enzyme that catalyzes the interconversion between dihydroxyacetone phosphate (DHAP) and D-glyceraldehyde-3-phosphate (G3P) in glycolysis and gluconeogenesis. In terms of biological role, it is also responsible for the non-negligible production of methylglyoxal a reactive cytotoxic side-product that modifies and can alter proteins, DNA and lipids. The protein is Triosephosphate isomerase of Procambarus clarkii (Red swamp crayfish).